The following is a 145-amino-acid chain: UPF0299 membrane protein plu1549 (145 aa).

The next 4 membrane-spanning stretches (helical) occupy residues 6–26 (VLIV…CLLT), 34–54 (LPII…LLAF), 65–85 (GCSL…VGVM), and 95–115 (IIPI…IVAY).

The protein belongs to the UPF0299 family.

Its subcellular location is the cell inner membrane. The sequence is that of UPF0299 membrane protein plu1549 from Photorhabdus laumondii subsp. laumondii (strain DSM 15139 / CIP 105565 / TT01) (Photorhabdus luminescens subsp. laumondii).